Here is a 228-residue protein sequence, read N- to C-terminus: Uracil-DNA glycosylase (228 aa).

The Proton acceptor role is filled by aspartate 64.

This sequence belongs to the uracil-DNA glycosylase (UDG) superfamily. UNG family.

It localises to the cytoplasm. It catalyses the reaction Hydrolyzes single-stranded DNA or mismatched double-stranded DNA and polynucleotides, releasing free uracil.. In terms of biological role, excises uracil residues from the DNA which can arise as a result of misincorporation of dUMP residues by DNA polymerase or due to deamination of cytosine. The sequence is that of Uracil-DNA glycosylase from Pectobacterium carotovorum subsp. carotovorum (strain PC1).